The chain runs to 117 residues: Big defensin (117 aa).

A signal peptide spans 1-23 (MKGNIGIAVFYMLLLLLPTDSIG). Positions 26–36 (MEEEQEKLFRQ) are excised as a propeptide. Intrachain disulfides connect C83-C113, C90-C108, and C94-C114.

It belongs to the big defensin family. As to quaternary structure, interacts with intracellular coagulation inhibitor 1/LICI-1. Expressed in all tissues examined, including hemocytes, heart, hepatopancreas, stomach, intestine and skeletal muscle.

Its subcellular location is the secreted. In terms of biological role, significantly inhibits the growth of Gram-negative and Gram-positive bacteria and fungi in vitro. The protein is Big defensin of Tachypleus tridentatus (Japanese horseshoe crab).